The sequence spans 223 residues: Urease accessory protein UreF (223 aa).

It belongs to the UreF family. In terms of assembly, ureD, UreF and UreG form a complex that acts as a GTP-hydrolysis-dependent molecular chaperone, activating the urease apoprotein by helping to assemble the nickel containing metallocenter of UreC. The UreE protein probably delivers the nickel.

The protein localises to the cytoplasm. Functionally, required for maturation of urease via the functional incorporation of the urease nickel metallocenter. The polypeptide is Urease accessory protein UreF (Rhizobium leguminosarum bv. trifolii (strain WSM2304)).